The sequence spans 168 residues: Phosphopantetheine adenylyltransferase (168 aa).

T9 serves as a coordination point for substrate. ATP is bound by residues 9 to 10 (TF) and H17. Positions 41, 73, and 87 each coordinate substrate. ATP-binding positions include 88–90 (GLR), E98, and 123–129 (YQFISGT).

This sequence belongs to the bacterial CoaD family. As to quaternary structure, homohexamer. Mg(2+) is required as a cofactor.

Its subcellular location is the cytoplasm. It carries out the reaction (R)-4'-phosphopantetheine + ATP + H(+) = 3'-dephospho-CoA + diphosphate. Its pathway is cofactor biosynthesis; coenzyme A biosynthesis; CoA from (R)-pantothenate: step 4/5. Functionally, reversibly transfers an adenylyl group from ATP to 4'-phosphopantetheine, yielding dephospho-CoA (dPCoA) and pyrophosphate. This chain is Phosphopantetheine adenylyltransferase, found in Paraburkholderia phymatum (strain DSM 17167 / CIP 108236 / LMG 21445 / STM815) (Burkholderia phymatum).